The primary structure comprises 165 residues: Lithostathine (165 aa).

Positions 1 to 21 (MTRNKYFILLSCLMVLSPSQG) are cleaved as a signal peptide. Residue Gln-22 is modified to Pyrrolidone carboxylic acid. Positions 33 to 163 (ITCPEGSNAY…DAQLSFVCKF (131 aa)) constitute a C-type lectin domain. Intrachain disulfides connect Cys-35–Cys-46, Cys-63–Cys-161, and Cys-136–Cys-153. N-linked (GlcNAc...) asparagine glycosylation occurs at Asn-129.

In terms of tissue distribution, expressed only in regenerating islets, but not in normal pancreatic islets, insulinomas or regenerating liver.

The protein localises to the secreted. In terms of biological role, might act as an inhibitor of spontaneous calcium carbonate precipitation. The sequence is that of Lithostathine (Reg1) from Rattus norvegicus (Rat).